Here is a 188-residue protein sequence, read N- to C-terminus: Ribosome maturation factor RimM (188 aa).

The PRC barrel domain occupies 93 to 166 (EDEYYDHQLI…RAVIDPPPGL (74 aa)).

This sequence belongs to the RimM family. As to quaternary structure, binds ribosomal protein uS19.

The protein resides in the cytoplasm. An accessory protein needed during the final step in the assembly of 30S ribosomal subunit, possibly for assembly of the head region. Essential for efficient processing of 16S rRNA. May be needed both before and after RbfA during the maturation of 16S rRNA. It has affinity for free ribosomal 30S subunits but not for 70S ribosomes. The polypeptide is Ribosome maturation factor RimM (Streptomyces coelicolor (strain ATCC BAA-471 / A3(2) / M145)).